The chain runs to 178 residues: Small ribosomal subunit protein uS5 (178 aa).

The S5 DRBM domain occupies Phe-15–Val-78.

It belongs to the universal ribosomal protein uS5 family. In terms of assembly, part of the 30S ribosomal subunit. Contacts proteins S4 and S8.

With S4 and S12 plays an important role in translational accuracy. Its function is as follows. Located at the back of the 30S subunit body where it stabilizes the conformation of the head with respect to the body. In Thermotoga maritima (strain ATCC 43589 / DSM 3109 / JCM 10099 / NBRC 100826 / MSB8), this protein is Small ribosomal subunit protein uS5.